The sequence spans 353 residues: MPLVCLTDFREHAREHLSKSTWDFIEGGADDCCTRDENMAAFKKIRLRPRYLKDVSKVDMRTTIQGAEISAPICIAPTGFHRLAWPDGEMSTARAAQAASICYITSTYASCSLEDIVAAAPRGLRWFQLYVHPNRQINKQMIQKVESLGFKALVITVDVPKVGNRRNDITNQVDLMKKLLLKDLGSPEMGNVMPYFQMSPIDPSICWEDLSWFQSMTRLPIILKGILTKEDAELAVKHNVHGIIVSNHGGRQLDEVPASIDALTEVVAAVKGKVEVYLDGGIRTGNDVLKALALGAKCVFVGRPILWGLAYKGEHGVKEVLDILKNEFHTSMTLTGCRSVAEINQDLIQFSRL.

The FMN hydroxy acid dehydrogenase domain maps to 2 to 353; that stretch reads PLVCLTDFRE…NQDLIQFSRL (352 aa). Residues 77 to 79, serine 106, and glutamine 128 each bind FMN; that span reads PTG. Residue tyrosine 130 coordinates a 2-oxocarboxylate. Threonine 156 provides a ligand contact to FMN. Arginine 165 contributes to the a 2-oxocarboxylate binding site. An FMN-binding site is contributed by lysine 224. Catalysis depends on histidine 248, which acts as the Proton acceptor. An a 2-oxocarboxylate-binding site is contributed by arginine 251. FMN-binding positions include 279–283 and 302–303; these read DGGIR and GR. Positions 351–353 match the Microbody targeting signal motif; that stretch reads SRL.

The protein belongs to the FMN-dependent alpha-hydroxy acid dehydrogenase family. In terms of assembly, homotetramer. FMN is required as a cofactor.

It is found in the peroxisome. It carries out the reaction a (2S)-2-hydroxycarboxylate + O2 = a 2-oxocarboxylate + H2O2. The enzyme catalyses 2-hydroxyhexadecanoate + O2 = 2-oxohexadecanoate + H2O2. The catalysed reaction is 2-hydroxyoctanoate + O2 = 2-oxooctanoate + H2O2. Its pathway is lipid metabolism; fatty acid metabolism. Oxidase that catalyzes the oxidation of medium and long chain hydroxyacids such as 2-hydroxyhexadecanoate and 2-hydroxyoctanoate, to the correspondong 2-oxoacids. Its role in the oxidation of 2-hydroxy fatty acids may contribute to the general pathway of fatty acid alpha-oxidation. Active in vitro with the artificial electron acceptor 2,6-dichlorophenolindophenol (DCIP), but O2 is believed to be the physiological electron acceptor, leading to the production of H2O2. This is 2-Hydroxyacid oxidase 2 (HAO2) from Bos taurus (Bovine).